Reading from the N-terminus, the 369-residue chain is p21-activated protein kinase-interacting protein 1-like (369 aa).

WD repeat units follow at residues 33-70 (AHTASLSAVAVNSKYVVTGSRDESIQIYDMRKKVEHGA), 73-111 (QHNGTITCLEFYGTAHLLSGAEDGLICIWNTKRWECLKS), 114-153 (AHKGHVTSLSIHPSGKLALSVGTDKTLRTWNLVEGRSAFI), 195-233 (TIEKRISSIRFITDSVLAIAGDDEIIRFYSCDSQKCLCE), and 236-278 (AREN…NNVP). The disordered stretch occupies residues 311–369 (ATSTEANESEKPSAVKKKKVCGMNKSGKLTKQRRRIVPAKRKLEAPLQKKKKKKQNSSE). Composition is skewed to basic residues over residues 338–350 (KLTKQRRRIVPAK) and 358–369 (QKKKKKKQNSSE).

It is found in the nucleus. It localises to the nucleolus. Functionally, negatively regulates the PAK1 kinase. PAK1 is a member of the PAK kinase family, which has been shown to play a positive role in the regulation of signaling pathways involving MAPK8 and RELA. PAK1 exists as an inactive homodimer, which is activated by binding of small GTPases such as CDC42 to an N-terminal regulatory domain. PAK1IP1 also binds to the N-terminus of PAK1, and inhibits the specific activation of PAK1 by CDC42. May be involved in ribosomal large subunit assembly. This is p21-activated protein kinase-interacting protein 1-like (PAK1IP1) from Gallus gallus (Chicken).